A 209-amino-acid chain; its full sequence is MLCSHDDDDPIRTAASHGIRRVRAFDAQRFELAVQSLLEASGIEIDTAHTGKTAQRVRELWQRRLLDGYDIDPAEALGHGFEDPRRDMVIIRSIAVHGVCPHHLLPFRGVAHVAYLPDGRLHGFGRIARMIDAISHRYTYQEWVTNEVAHALVAHGQARGAACLIEAEQLCLLMGENRRGDERVITQCYVGEFEQNMQARTEFLRAIKG.

3 residues coordinate Zn(2+): Cys-100, His-103, and Cys-171.

Belongs to the GTP cyclohydrolase I family. Toroid-shaped homodecamer, composed of two pentamers of five dimers.

The catalysed reaction is GTP + H2O = 7,8-dihydroneopterin 3'-triphosphate + formate + H(+). It participates in cofactor biosynthesis; 7,8-dihydroneopterin triphosphate biosynthesis; 7,8-dihydroneopterin triphosphate from GTP: step 1/1. This chain is GTP cyclohydrolase 1, found in Ralstonia nicotianae (strain ATCC BAA-1114 / GMI1000) (Ralstonia solanacearum).